Here is a 202-residue protein sequence, read N- to C-terminus: CASP-like protein 2B2 (202 aa).

Residues methionine 1–arginine 29 are Cytoplasmic-facing. The helical transmembrane segment at leucine 30–valine 50 threads the bilayer. The Extracellular portion of the chain corresponds to glycine 51 to lysine 72. The chain crosses the membrane as a helical span at residues alanine 73–valine 93. The Cytoplasmic portion of the chain corresponds to arginine 94–aspartate 118. Residues glutamine 119–alanine 139 traverse the membrane as a helical segment. Residues lysine 140–glutamate 164 lie on the Extracellular side of the membrane. A helical membrane pass occupies residues glycine 165–phenylalanine 185. Topologically, residues serine 186 to tryptophan 202 are cytoplasmic.

The protein belongs to the Casparian strip membrane proteins (CASP) family. As to quaternary structure, homodimer and heterodimers.

The protein resides in the cell membrane. This Populus trichocarpa (Western balsam poplar) protein is CASP-like protein 2B2.